The following is a 106-amino-acid chain: Late cornified envelope protein 2A (106 aa).

Positions 1-10 (MSCQQNQQQC) are enriched in low complexity. The tract at residues 1–25 (MSCQQNQQQCQPPPKCPPKCPPKCP) is disordered. The segment covering 11-25 (QPPPKCPPKCPPKCP) has biased composition (pro residues).

It belongs to the LCE family. Interacts with CYSRT1. As to expression, skin-specific. Expression was readily detected in adult trunk skin, adult arm skin, fetal skin, penal skin, vulva, esophagus and tongue. Not expressed in the cervix, rectum, lung, colon, or placenta.

In terms of biological role, precursors of the cornified envelope of the stratum corneum. The chain is Late cornified envelope protein 2A (LCE2A) from Homo sapiens (Human).